The sequence spans 165 residues: Shikimate kinase (165 aa).

ATP is bound at residue Gly11–Thr16. Thr15 contacts Mg(2+). Asp33, Arg57, and Gly78 together coordinate substrate. Arg116 serves as a coordination point for ATP. Arg134 provides a ligand contact to substrate.

The protein belongs to the shikimate kinase family. In terms of assembly, monomer. Mg(2+) is required as a cofactor.

The protein resides in the cytoplasm. The enzyme catalyses shikimate + ATP = 3-phosphoshikimate + ADP + H(+). Its pathway is metabolic intermediate biosynthesis; chorismate biosynthesis; chorismate from D-erythrose 4-phosphate and phosphoenolpyruvate: step 5/7. Catalyzes the specific phosphorylation of the 3-hydroxyl group of shikimic acid using ATP as a cosubstrate. The protein is Shikimate kinase of Bacillus cytotoxicus (strain DSM 22905 / CIP 110041 / 391-98 / NVH 391-98).